The following is a 37-amino-acid chain: Turripeptide Lol6.2 (37 aa).

Intrachain disulfides connect Cys-4–Cys-16, Cys-8–Cys-21, and Cys-15–Cys-29.

As to expression, expressed by the venom duct.

The protein resides in the secreted. Acts as a neurotoxin by inhibiting an ion channel. The chain is Turripeptide Lol6.2 from Iotyrris olangoensis (Sea snail).